The following is a 466-amino-acid chain: Ribulose bisphosphate carboxylase large chain (466 aa).

N6,N6,N6-trimethyllysine is present on K5. Residues N114 and T164 each contribute to the substrate site. K166 functions as the Proton acceptor in the catalytic mechanism. K168 contributes to the substrate binding site. Mg(2+) is bound by residues K192, D194, and E195. K192 is modified (N6-carboxylysine). H285 acts as the Proton acceptor in catalysis. Residues R286, H318, and S370 each coordinate substrate.

It belongs to the RuBisCO large chain family. Type I subfamily. In terms of assembly, heterohexadecamer of 8 large chains and 8 small chains; disulfide-linked. The disulfide link is formed within the large subunit homodimers. Mg(2+) is required as a cofactor. Post-translationally, the disulfide bond which can form in the large chain dimeric partners within the hexadecamer appears to be associated with oxidative stress and protein turnover.

The protein localises to the plastid. It is found in the chloroplast. The catalysed reaction is 2 (2R)-3-phosphoglycerate + 2 H(+) = D-ribulose 1,5-bisphosphate + CO2 + H2O. It catalyses the reaction D-ribulose 1,5-bisphosphate + O2 = 2-phosphoglycolate + (2R)-3-phosphoglycerate + 2 H(+). In terms of biological role, ruBisCO catalyzes two reactions: the carboxylation of D-ribulose 1,5-bisphosphate, the primary event in carbon dioxide fixation, as well as the oxidative fragmentation of the pentose substrate in the photorespiration process. Both reactions occur simultaneously and in competition at the same active site. In Gonopterodendron arboreum (Maracaibo lignum-vitae), this protein is Ribulose bisphosphate carboxylase large chain.